A 205-amino-acid polypeptide reads, in one-letter code: Carboxysome shell protein CsoS1D (205 aa).

2 BMC circularly permuted domains span residues 3–100 (ELRT…TREY) and 106–205 (VVMW…TCRS). The short motif at 68–69 (ER) is the Gates the pore element.

Belongs to the EutL/PduB family. In terms of assembly, homotrimer. Forms a dimer of stacked trimers, the same faces interact. Probably forms a CsoS1-CsoS1D-CsoS2 complex.

It is found in the carboxysome. Its function is as follows. Part of the carboxysome shell, a polyhedral inclusion where RuBisCO (ribulose bisphosphate carboxylase, cbbL-cbbS) is sequestered. It may control transport of RuBisCO reactants in and out of the carboxysome. The polypeptide is Carboxysome shell protein CsoS1D (Hydrogenovibrio crunogenus (strain DSM 25203 / XCL-2) (Thiomicrospira crunogena)).